Here is a 102-residue protein sequence, read N- to C-terminus: ATP-dependent Clp protease adapter protein ClpS (102 aa).

Belongs to the ClpS family. In terms of assembly, binds to the N-terminal domain of the chaperone ClpA.

Its function is as follows. Involved in the modulation of the specificity of the ClpAP-mediated ATP-dependent protein degradation. The polypeptide is ATP-dependent Clp protease adapter protein ClpS (Wolinella succinogenes (strain ATCC 29543 / DSM 1740 / CCUG 13145 / JCM 31913 / LMG 7466 / NCTC 11488 / FDC 602W) (Vibrio succinogenes)).